The sequence spans 568 residues: Urease subunit alpha (568 aa).

Positions 131–568 constitute a Urease domain; sequence GGIDTHIHFI…LPMAQRYFLF (438 aa). Positions 136, 138, and 219 each coordinate Ni(2+). An N6-carboxylysine modification is found at lysine 219. Histidine 221 serves as a coordination point for substrate. Ni(2+)-binding residues include histidine 248 and histidine 274. Histidine 322 functions as the Proton donor in the catalytic mechanism. Aspartate 362 contributes to the Ni(2+) binding site.

It belongs to the metallo-dependent hydrolases superfamily. Urease alpha subunit family. In terms of assembly, heterotrimer of UreA (gamma), UreB (beta) and UreC (alpha) subunits. Three heterotrimers associate to form the active enzyme. The cofactor is Ni cation. In terms of processing, carboxylation allows a single lysine to coordinate two nickel ions.

The protein localises to the cytoplasm. It carries out the reaction urea + 2 H2O + H(+) = hydrogencarbonate + 2 NH4(+). The protein operates within nitrogen metabolism; urea degradation; CO(2) and NH(3) from urea (urease route): step 1/1. The protein is Urease subunit alpha of Nostoc sp. (strain PCC 7120 / SAG 25.82 / UTEX 2576).